The primary structure comprises 224 residues: Cysteine S-methyltransferase NleE (224 aa).

The interaction with host proteins TAB2, TAB3 and ZRANB3 stretch occupies residues 49-52 (GITR). S-adenosyl-L-methionine contacts are provided by Ala-92, Ser-98, Arg-107, Gln-111, Tyr-204, and Glu-208.

Belongs to the NleE/OspZ family. In terms of assembly, monomer.

It localises to the secreted. The protein localises to the host nucleus. It catalyses the reaction L-cysteinyl-[protein] + S-adenosyl-L-methionine = S-methyl-L-cysteinyl-[protein] + S-adenosyl-L-homocysteine + H(+). In terms of biological role, cysteine methyltransferase effector that inhibits host cell NF-kappa-B activation by preventing nuclear translocation of host protein RELA/p65. Acts by mediating cysteine methylation of host proteins TAB2 and TAB3: methylation of a conserved cysteine residue of the RanBP2-type zinc finger (NZF) of TAB2 and TAB3 disrupts zinc-binding, thereby inactivating the ubiquitin chain-binding activity of TAB2 and TAB3, leading to NF-kappa-B inactivation. Also mediates cysteine methylation of host protein ZRANB3, inactivating its ability to bind ubiquitin chains. This Escherichia coli O157:H7 protein is Cysteine S-methyltransferase NleE.